Here is a 118-residue protein sequence, read N- to C-terminus: Vitelline membrane protein Vm32E (118 aa).

The first 17 residues, 1 to 17, serve as a signal peptide directing secretion; sequence MKIVALTLVAFVALAGA. Positions 36-75 constitute a VM domain; the sequence is GYPAPPCPTNYLFSCQPNLAPAPCAQEAQAPAYGSAGAYT.

Belongs to the vitelline membrane family.

The protein resides in the secreted. Functionally, major early eggshell protein. This Drosophila sechellia (Fruit fly) protein is Vitelline membrane protein Vm32E.